The primary structure comprises 336 residues: F-box protein PP2-B1 (336 aa).

The disordered stretch occupies residues 1-22; sequence MEQIHGGDSNSGGGGGGSSRND. A compositionally biased stretch (gly residues) spans 9–18; it reads SNSGGGGGGS. The 47-residue stretch at 29 to 75 folds into the F-box domain; that stretch reads ASRFDALPEDCISKVISHTSPRDACVVASVSKSVKSAAQSDLVWEMF.

As to quaternary structure, part of a SCF (ASK-cullin-F-box) protein ligase complex. Interacts with SKP1A/ASK1 and SPK1B/ASK2.

It is found in the nucleus. Its pathway is protein modification; protein ubiquitination. Its function is as follows. Component of SCF(ASK-cullin-F-box) E3 ubiquitin ligase complexes, which may mediate the ubiquitination and subsequent proteasomal degradation of target proteins. This chain is F-box protein PP2-B1 (PP2B1), found in Arabidopsis thaliana (Mouse-ear cress).